We begin with the raw amino-acid sequence, 392 residues long: Lipid-A-disaccharide synthase (392 aa).

This sequence belongs to the LpxB family.

It catalyses the reaction a lipid X + a UDP-2-N,3-O-bis[(3R)-3-hydroxyacyl]-alpha-D-glucosamine = a lipid A disaccharide + UDP + H(+). Its pathway is bacterial outer membrane biogenesis; LPS lipid A biosynthesis. Its function is as follows. Condensation of UDP-2,3-diacylglucosamine and 2,3-diacylglucosamine-1-phosphate to form lipid A disaccharide, a precursor of lipid A, a phosphorylated glycolipid that anchors the lipopolysaccharide to the outer membrane of the cell. The sequence is that of Lipid-A-disaccharide synthase from Bradyrhizobium diazoefficiens (strain JCM 10833 / BCRC 13528 / IAM 13628 / NBRC 14792 / USDA 110).